Consider the following 362-residue polypeptide: Methionine import ATP-binding protein MetN (362 aa).

The ABC transporter domain maps to 2–241 (IHIENLSKTY…PRHEVTRAMV (240 aa)). ATP is bound at residue 38 to 45 (GPSGAGKS).

This sequence belongs to the ABC transporter superfamily. Methionine importer (TC 3.A.1.24) family. The complex is composed of two ATP-binding proteins (MetN), two transmembrane proteins (MetI) and a solute-binding protein (MetQ).

Its subcellular location is the cell inner membrane. The enzyme catalyses L-methionine(out) + ATP + H2O = L-methionine(in) + ADP + phosphate + H(+). It catalyses the reaction D-methionine(out) + ATP + H2O = D-methionine(in) + ADP + phosphate + H(+). Its function is as follows. Part of the ABC transporter complex MetNIQ involved in methionine import. Responsible for energy coupling to the transport system. The chain is Methionine import ATP-binding protein MetN from Bordetella bronchiseptica (strain ATCC BAA-588 / NCTC 13252 / RB50) (Alcaligenes bronchisepticus).